We begin with the raw amino-acid sequence, 86 residues long: Toxin Tpa5 (86 aa).

Positions 1-20 are cleaved as a signal peptide; that stretch reads MSIFPIALALLLIGLEEGEA. Residues 22 to 85 form the LCN-type CS-alpha/beta domain; sequence RDGYPISKNN…WGDPGTPPCM (64 aa). 4 cysteine pairs are disulfide-bonded: Cys33–Cys84, Cys37–Cys58, Cys43–Cys64, and Cys47–Cys66.

This sequence belongs to the long (4 C-C) scorpion toxin superfamily. Sodium channel inhibitor family. Beta subfamily. In terms of tissue distribution, expressed by the venom gland.

Its subcellular location is the secreted. Its function is as follows. Beta toxins bind voltage-independently at site-4 of sodium channels (Nav) and shift the voltage of activation toward more negative potentials thereby affecting sodium channel activation and promoting spontaneous and repetitive firing. This Tityus pachyurus (Colombian scorpion) protein is Toxin Tpa5.